The chain runs to 323 residues: L-lactate dehydrogenase (323 aa).

NAD(+) contacts are provided by residues valine 16, asparagine 37, and 81-82; that span reads GA. Substrate contacts are provided by residues glutamine 84, arginine 90, and 122 to 125; that span reads NPVD. NAD(+) contacts are provided by residues 120 to 122 and serine 145; that span reads ATN. 150–153 provides a ligand contact to substrate; that stretch reads DSAR. Histidine 177 serves as the catalytic Proton acceptor. Tyrosine 221 carries the phosphotyrosine modification. Position 230 (threonine 230) interacts with substrate.

This sequence belongs to the LDH/MDH superfamily. LDH family. Homotetramer.

The protein localises to the cytoplasm. The enzyme catalyses (S)-lactate + NAD(+) = pyruvate + NADH + H(+). It functions in the pathway fermentation; pyruvate fermentation to lactate; (S)-lactate from pyruvate: step 1/1. Functionally, catalyzes the conversion of lactate to pyruvate. In Limosilactobacillus reuteri (Lactobacillus reuteri), this protein is L-lactate dehydrogenase.